The chain runs to 78 residues: Large ribosomal subunit protein bL28 (78 aa).

Belongs to the bacterial ribosomal protein bL28 family.

This chain is Large ribosomal subunit protein bL28, found in Rippkaea orientalis (strain PCC 8801 / RF-1) (Cyanothece sp. (strain PCC 8801)).